We begin with the raw amino-acid sequence, 988 residues long: uncharacterized protein (988 aa).

A signal peptide spans 1 to 17 (MIRLVFLFLLVVLSVEL). The interval 111 to 176 (YQNPSTFPST…SKLNQKSSKS (66 aa)) is disordered. Low complexity predominate over residues 114–140 (PSTFPSTTTASTTTSTTTMPPTYQTTT). 4 N-linked (GlcNAc...) asparagine glycosylation sites follow: Asn-247, Asn-389, Asn-529, and Asn-601. A helical membrane pass occupies residues 690 to 710 (IMIFTIFSVLSALTCLMCMYL). An N-linked (GlcNAc...) asparagine glycan is attached at Asn-720. The next 6 membrane-spanning stretches (helical) occupy residues 721–741 (LTAV…AFII), 753–773 (LLFP…TVLI), 784–804 (VLIA…WLLL), 832–852 (MILL…IFAL), 864–884 (LMIS…LPLI), and 891–911 (TVMA…SHTG). The tract at residues 966–988 (RSEDTLRRNTSLYGTEGYELPTP) is disordered. Residue Asn-974 is glycosylated (N-linked (GlcNAc...) asparagine).

Its subcellular location is the membrane. This is an uncharacterized protein from Caenorhabditis elegans.